Reading from the N-terminus, the 149-residue chain is Large ribosomal subunit protein bL9 (149 aa).

This sequence belongs to the bacterial ribosomal protein bL9 family.

Its function is as follows. Binds to the 23S rRNA. This is Large ribosomal subunit protein bL9 from Thiobacillus denitrificans (strain ATCC 25259 / T1).